Consider the following 207-residue polypeptide: Protein MK0488 (207 aa).

In terms of domain architecture, AMMECR1 spans 8–200; it reads EEGEFLVRLA…EEEPEGPVRE (193 aa).

The sequence is that of Protein MK0488 from Methanopyrus kandleri (strain AV19 / DSM 6324 / JCM 9639 / NBRC 100938).